Reading from the N-terminus, the 108-residue chain is Peptidyl-prolyl cis-trans isomerase FKBP1B (108 aa).

The PPIase FKBP-type domain occupies glycine 20–glutamate 108.

In terms of assembly, identified in a complex composed of RYR2, FKBP1B, PKA catalytic subunit, PRKAR2A, AKAP6, and the protein phosphatases PP2A and PP1. Interacts directly with RYR2.

It localises to the cytoplasm. The protein localises to the sarcoplasmic reticulum. The catalysed reaction is [protein]-peptidylproline (omega=180) = [protein]-peptidylproline (omega=0). Inhibited by both FK506 and rapamycin. Its function is as follows. Has the potential to contribute to the immunosuppressive and toxic effects of FK506 and rapamycin. PPIases accelerate the folding of proteins. It catalyzes the cis-trans isomerization of proline imidic peptide bonds in oligopeptides. In Bos taurus (Bovine), this protein is Peptidyl-prolyl cis-trans isomerase FKBP1B (FKBP1B).